Reading from the N-terminus, the 836-residue chain is DNA gyrase subunit A (836 aa).

In terms of domain architecture, Topo IIA-type catalytic spans leucine 46 to leucine 510. Catalysis depends on tyrosine 134, which acts as the O-(5'-phospho-DNA)-tyrosine intermediate. A GyrA-box motif is present at residues glutamine 537–glycine 543.

This sequence belongs to the type II topoisomerase GyrA/ParC subunit family. As to quaternary structure, heterotetramer, composed of two GyrA and two GyrB chains. In the heterotetramer, GyrA contains the active site tyrosine that forms a transient covalent intermediate with DNA, while GyrB binds cofactors and catalyzes ATP hydrolysis.

It localises to the cytoplasm. The catalysed reaction is ATP-dependent breakage, passage and rejoining of double-stranded DNA.. In terms of biological role, a type II topoisomerase that negatively supercoils closed circular double-stranded (ds) DNA in an ATP-dependent manner to modulate DNA topology and maintain chromosomes in an underwound state. Negative supercoiling favors strand separation, and DNA replication, transcription, recombination and repair, all of which involve strand separation. Also able to catalyze the interconversion of other topological isomers of dsDNA rings, including catenanes and knotted rings. Type II topoisomerases break and join 2 DNA strands simultaneously in an ATP-dependent manner. The sequence is that of DNA gyrase subunit A from Mycoplasma genitalium (strain ATCC 33530 / DSM 19775 / NCTC 10195 / G37) (Mycoplasmoides genitalium).